A 1401-amino-acid chain; its full sequence is Uveal autoantigen with coiled-coil domains and ankyrin repeats protein (1401 aa).

6 ANK repeats span residues 25–53 (LMRAAERGDVEKVSSILAKKGVNPGKLDV), 54–83 (EGRSAFHVVASKGNLECLNAILIHGVDITT), 87–116 (AGRNALHLAAKYGHALCLQKLLQYNCPTEH), 120–149 (QGRTALHDAAMADCPSSIQLLCDHGASVNA), 153–182 (DGRTPLVLATQMCRPTICQLLIDRGADINS), and 186–215 (QNRTALMLGCEYGCKDAVEVLIKNGADVTL). Position 265 is a phosphoserine (serine 265). Coiled-coil stretches lie at residues 273–361 (TKSN…SRFK), 423–827 (ENEI…EKIY), and 856–1368 (ALSS…VIAI). A Glycyl lysine isopeptide (Lys-Gly) (interchain with G-Cter in SUMO2) cross-link involves residue lysine 1020.

As to quaternary structure, component of the apoptosome complex, composed of APAF1, pro-caspase-9 and UACA. In the complex, it probably interacts directly with APAF1. Interacts with LGALS3. Interacts with ARF6 and ACTB. Interacts with RAB39A. Highly expressed in muscle and heart, moderately in liver, kidney and pancreas, and weakly in placenta and lung.

The protein resides in the nucleus. Its subcellular location is the cytoplasm. It localises to the cytoskeleton. Functionally, regulates APAF1 expression and plays an important role in the regulation of stress-induced apoptosis. Promotes apoptosis by regulating three pathways, apoptosome up-regulation, LGALS3/galectin-3 down-regulation and NF-kappa-B inactivation. Regulates the redistribution of APAF1 into the nucleus after proapoptotic stress. Down-regulates the expression of LGALS3 by inhibiting NFKB1. Modulates isoactin dynamics to regulate the morphological alterations required for cell growth and motility. Interaction with ARF6 may modulate cell shape and motility after injury. May be involved in multiple neurite formation. The sequence is that of Uveal autoantigen with coiled-coil domains and ankyrin repeats protein (UACA) from Bos taurus (Bovine).